We begin with the raw amino-acid sequence, 232 residues long: RNA chaperone ProQ (232 aa).

Positions Glu-105–Asp-182 are disordered. Positions Gln-117–Arg-136 are enriched in basic and acidic residues. Over residues Arg-137–Pro-146 the composition is skewed to basic residues. Residues Arg-147–His-177 show a composition bias toward basic and acidic residues.

Belongs to the ProQ family.

Its subcellular location is the cytoplasm. RNA chaperone with significant RNA binding, RNA strand exchange and RNA duplexing activities. May regulate ProP activity through an RNA-based, post-transcriptional mechanism. The protein is RNA chaperone ProQ of Shigella flexneri serotype 5b (strain 8401).